The chain runs to 84 residues: Small ribosomal subunit protein bS16 (84 aa).

This sequence belongs to the bacterial ribosomal protein bS16 family.

The chain is Small ribosomal subunit protein bS16 from Koribacter versatilis (strain Ellin345).